Here is a 563-residue protein sequence, read N- to C-terminus: Glucocorticoid modulatory element-binding protein 1 (563 aa).

Residue A2 is modified to N-acetylalanine. The region spanning 72 to 156 (ASTIEANEDM…RKMMDSGQID (85 aa)) is the SAND domain. Residue C103 coordinates Zn(2+). 4 residues coordinate DNA: K129, K133, K136, and R147. The Zn(2+) site is built by H160, C164, and C168. The stretch at 304-355 (MDTVKKVLDNRKNQVEQGEEQFLYTLTDLERQLEEQKKQAQDHRLKSQTVQN) forms a coiled coil. The disordered stretch occupies residues 360 to 385 (PVSTPKPPKRPRLQRPASTTVLSPSP).

As to quaternary structure, homodimer, and heterodimer of GMEB1 and GMEB2. Interacts with TRIM63. Interacts with the glucocorticoid receptor (NR3C1) and NCOA2/TIF2. May interact with HSP27 and CREB-binding protein (CBP).

The protein resides in the nucleus. It is found in the cytoplasm. Its function is as follows. Trans-acting factor that binds to glucocorticoid modulatory elements (GME) present in the TAT (tyrosine aminotransferase) promoter and increases sensitivity to low concentrations of glucocorticoids. Also binds to the transferrin receptor promoter. This chain is Glucocorticoid modulatory element-binding protein 1 (GMEB1), found in Bos taurus (Bovine).